We begin with the raw amino-acid sequence, 687 residues long: DNA-directed RNA polymerase subunit beta' (687 aa).

4 residues coordinate Zn(2+): Cys-69, Cys-71, Cys-87, and Cys-90. Residues Asp-491, Asp-493, and Asp-495 each contribute to the Mg(2+) site.

This sequence belongs to the RNA polymerase beta' chain family. RpoC1 subfamily. As to quaternary structure, in plastids the minimal PEP RNA polymerase catalytic core is composed of four subunits: alpha, beta, beta', and beta''. When a (nuclear-encoded) sigma factor is associated with the core the holoenzyme is formed, which can initiate transcription. Mg(2+) serves as cofactor. Zn(2+) is required as a cofactor.

The protein resides in the plastid. It localises to the chloroplast. The enzyme catalyses RNA(n) + a ribonucleoside 5'-triphosphate = RNA(n+1) + diphosphate. Its function is as follows. DNA-dependent RNA polymerase catalyzes the transcription of DNA into RNA using the four ribonucleoside triphosphates as substrates. The sequence is that of DNA-directed RNA polymerase subunit beta' from Glycine max (Soybean).